The chain runs to 657 residues: MSEITDDRQQVIITLPDGSERTYSSGVTGLEIAESIGKKLAEAALAFTIDGKPRDLDTPVTENARVSIITFDSPEGKEIFWHSSSHLMAHAIEELFPGAKFGAGPAIEQGFYYDIACEHRFNEEDLRAIEAKMLEISKRNLSINREEMPREQAIEYFSNERKDPYKVEILEDTLKDVPTVSVYHQDGFADLCSGPHLPSTGKVKAVLLTNISSSYWRGDSSRETMQRIYGITFPSDKLLKEHIARLEEARKRDHRKLGAELGLFMLTPEVGSGLPIWLPNGAIIRNELETFLKAEQRKRGYVPVYTPHIGNIELYKRSGHYPYYSDSQFPPLTYKDETGREEQYLLKPMNCPHHHLIYSQTLRSYRDLPIRLTEFGTVYRHEQSGELNGLVRARGFTQDDSHIYCRPDQLVDEICNAIDLTRFVFNTLGFDEVETRLSLHDPENQSKYGGTAEVWGQAEKDVKEAADRMGIKYFIGIGEASFYGPKIDFIVRDAIGRKWQLGTVQVDYVMPERFDLSYIGSDGQKHRPVVIHRAPFGSMERFIGVLIEHTAGNFPLWLAPVQAVVLPIAEEVHDYAREVYAKLHEAGIRTELDLRSEKIGKKIREAELSKIPAMLVIGRNEQEKGEVSLRRHRKGDEGSFGVDELIARLCEERDRRF.

Positions 7–70 (DRQQVIITLP…TENARVSIIT (64 aa)) constitute a TGS domain. Residues 253–555 (DHRKLGAELG…LIEHTAGNFP (303 aa)) form a catalytic region. Positions 351, 402, and 532 each coordinate Zn(2+).

Belongs to the class-II aminoacyl-tRNA synthetase family. As to quaternary structure, homodimer. It depends on Zn(2+) as a cofactor.

The protein localises to the cytoplasm. It carries out the reaction tRNA(Thr) + L-threonine + ATP = L-threonyl-tRNA(Thr) + AMP + diphosphate + H(+). Functionally, catalyzes the attachment of threonine to tRNA(Thr) in a two-step reaction: L-threonine is first activated by ATP to form Thr-AMP and then transferred to the acceptor end of tRNA(Thr). Also edits incorrectly charged L-seryl-tRNA(Thr). This is Threonine--tRNA ligase from Chlorobaculum tepidum (strain ATCC 49652 / DSM 12025 / NBRC 103806 / TLS) (Chlorobium tepidum).